Consider the following 955-residue polypeptide: Protein MEI2-like 3 (955 aa).

The segment at 64–83 is disordered; that stretch reads IQPNGANHAGDPETPGGQAF. 2 consecutive RRM domains span residues 270-343 and 355-428; these read RTLV…FSFP and GMLV…LSQH. Disordered regions lie at residues 436–465 and 897–955; these read RQQH…KLGT and NAGD…LEQT. Over residues 935–955 the composition is skewed to polar residues; that stretch reads DQESNSVGTANSTCRTTLEQT.

In terms of biological role, probable RNA-binding protein that may play a role in growth regulation. This Oryza sativa subsp. japonica (Rice) protein is Protein MEI2-like 3 (ML3).